A 256-amino-acid chain; its full sequence is MTAASSPHPGVSAEDIEFYQANGYLRLPQEAHGLFDDLAKLQAWVAEISQWGLETGKWRHYYETTNGKHLLWGTEKLMEYHAPMRDLIAGEAPLTLLKSLTGKDMVVFKDEIGWKLPGGKGAVPHLDRPAYSMFAPEFIEIMIAVDAHTVENGCLQFVPGSHKEAVPISADGRIASAWLEGKEFIPMVLDPGDVLIFNESMAHRLDPNKTDQRRAAVFGTYHFDRSQPDLRDKFYAHRLIHSPPENAWVETVEAQT.

Residues H125, D127, and H203 each contribute to the Fe cation site.

This sequence belongs to the PhyH family. Homodimer. Fe cation is required as a cofactor.

The protein operates within alkaloid biosynthesis. Its function is as follows. Dioxygenase; part of the gene cluster that mediates the biosynthesis of loline alkaloids, potent insecticidal agents composed of a pyrrolizidine ring system and an uncommon ether bridge linking carbons 2 and 7. Lolines are structurally differentiated by the various modifications of the L-amino group and include norloline, loline, N-methylloline, N-acetylloline, N-acetylnorloline, and N-formylloline. The first committed step is the condensation of O-acetyl-L-homoserine (derived from L-aspartic acid) and L-proline, probably catalyzed by the gamma-type pyridoxal 5'-phosphate(PLP)-dependent enzyme lolC, to give the diamino diacid, NACPP. Ensuing cyclization, decarboxylation, and acetylation steps yield 1-exo-acetamidopyrrolizidine (AcAP). LolO is required for installation of the ether bridge upon the pathway intermediate, 1-exo-acetamidopyrrolizidine (AcAP). In sequential 2-oxoglutarate- and O(2)-consuming steps, lolO removes hydrogens from C2 and C7 of AcAP to form both carbon-oxygen bonds in N-acetylnorloline (NANL), the precursor to all other lolines. The enzymes lolD, lolE, lolF and lolT have also been proposed to be involved in the ether-bridge installation. Further processing of the exocyclic moiety of NANL by fungal N-acetamidase (LolN), methyltransferase (LolM), and cytochrome P450 (LolP) enzymes, with occasional involvement of a plant acetyltransferase, generates the other known lolines. LolN transforms NANL to norlonine which is monomethylated and dimethylated to respectively lonine and N-methyllonine (NML) by lolM. LolP catalyzes hydroxylation of the methyl group in N-methylloline (NML) and further oxygenation to N-formylloline (NFL). A plant acetyltransferase is responsible for the acetylation of loline to form N-acetylloline (NAL). LolA might interact with aspartate kinase to prevent feedback inhibition of its activity by these end products and thereby promote production of L-homoserine from L-aspartate. This is Dioxygenase lolE1 from Epichloe uncinata (Endophyte fungus).